Here is a 352-residue protein sequence, read N- to C-terminus: Phosphoribosylformylglycinamidine cyclo-ligase (352 aa).

Belongs to the AIR synthase family.

Its subcellular location is the cytoplasm. It carries out the reaction 2-formamido-N(1)-(5-O-phospho-beta-D-ribosyl)acetamidine + ATP = 5-amino-1-(5-phospho-beta-D-ribosyl)imidazole + ADP + phosphate + H(+). It functions in the pathway purine metabolism; IMP biosynthesis via de novo pathway; 5-amino-1-(5-phospho-D-ribosyl)imidazole from N(2)-formyl-N(1)-(5-phospho-D-ribosyl)glycinamide: step 2/2. This is Phosphoribosylformylglycinamidine cyclo-ligase from Pseudomonas entomophila (strain L48).